A 261-amino-acid polypeptide reads, in one-letter code: Syntaxin-7 (261 aa).

Residue Ser-2 is modified to N-acetylserine. Residues Ser-2–Leu-238 lie on the Cytoplasmic side of the membrane. Thr-4 is modified (phosphothreonine). The stretch at Glu-47 to Lys-68 forms a coiled coil. At Thr-79 the chain carries Phosphothreonine. Ser-125, Ser-126, Ser-129, and Ser-205 each carry phosphoserine. Positions Val-128 to Gln-148 are disordered. Positions Leu-165–Ala-227 constitute a t-SNARE coiled-coil homology domain. Residues Cys-239–Leu-259 traverse the membrane as a helical; Anchor for type IV membrane protein segment. The Vesicular portion of the chain corresponds to Lys-260–Gly-261.

It belongs to the syntaxin family. Interacts with VPS11, VPS16 and VPS18. Interacts with VPS33A. Forms a SNARE complex with VTI1B, STX8 and VAMP8 which functions in the homotypic fusion of late endosomes. Component of the SNARE complex composed of STX7, STX8, VAMP7 and VTI1B that is required for heterotypic fusion of late endosomes with lysosomes. Interacts with TPC1. As to expression, detected in all tissues tested. Highest expression is found in kidney followed by lung, spleen, heart and brain. Lower expression, in skeletal muscle, liver and testis.

The protein localises to the early endosome membrane. Its function is as follows. May be involved in protein trafficking from the plasma membrane to the early endosome (EE) as well as in homotypic fusion of endocytic organelles. Mediates the endocytic trafficking from early endosomes to late endosomes and lysosomes. In Rattus norvegicus (Rat), this protein is Syntaxin-7 (Stx7).